Consider the following 1055-residue polypeptide: Leukotoxin (1055 aa).

Positions 11-49 (QQAAQFANSVADRAKENIDAAKEQLQKALDKLGKTGKKL) form a coiled coil. 2 cholesterol recognition/amino acid consensus (CRAC) region regions span residues 334–340 (LEEYSKR) and 502–506 (VDYLK). Hemolysin-type calcium-binding repeat units follow at residues 721 to 738 (IGST…NDVF), 739 to 756 (HGHD…DDRL), 757 to 774 (YGDN…NDKL), 775 to 792 (YGGA…NNYL), 793 to 810 (DGGE…SDIL), 811 to 828 (RGGS…DDLL), and 829 to 846 (DGGE…NDIY). Positions 795–815 (GEGDDHLEGGNGSDILRGGSG) are disordered. The segment at 990-1009 (KGKSSSLMSSSRSSSMLTQK) is disordered. Residues 993–1006 (SSSLMSSSRSSSML) show a composition bias toward low complexity.

This sequence belongs to the RTX prokaryotic toxin (TC 1.C.11) family. As to quaternary structure, interacts specifically with the superoxide dismutase [Cu-Zn]. This interaction may protect LtxA from reactive oxygen species and reactive nitrogen species produced by host inflammatory cells during disease. Interacts with the human leukocyte adhesion glycoprotein LFA-1 (ITGAL-ITGB2). Post-translationally, acylated at Lys-562 and Lys-687 by LtxC. This modification is required for full activity. Isolated methyl esters contain palmitoyl and palmitolyl fatty acyl groups with smaller quantities of myristic and stearic fatty acids.

It is found in the cell outer membrane. It localises to the secreted. In terms of biological role, virulence factor that plays an important role in immune evasion. Lyses human lymphocytes and monocytes. Binds to the LFA-1 integrin on the surface of the host cell and to cholesterol-containing membranes, which probably results in large LtxA-LFA-1 clusters in lipid rafts. Also shows beta-hemolytic activity on certain types of growth media. In Aggregatibacter actinomycetemcomitans (Actinobacillus actinomycetemcomitans), this protein is Leukotoxin.